We begin with the raw amino-acid sequence, 105 residues long: MNRLKKGDDVIVIAGKDKGRRGVVKSFAKGGSLVLVEGINIVKKHVKPNPNRGVEGGVVEKELPVDASNVAIFNPATEKADRVGYKFVDEKKVRYFKSNGELVDL.

It belongs to the universal ribosomal protein uL24 family. Part of the 50S ribosomal subunit.

In terms of biological role, one of two assembly initiator proteins, it binds directly to the 5'-end of the 23S rRNA, where it nucleates assembly of the 50S subunit. Its function is as follows. One of the proteins that surrounds the polypeptide exit tunnel on the outside of the subunit. This Francisella philomiragia subsp. philomiragia (strain ATCC 25017 / CCUG 19701 / FSC 153 / O#319-036) protein is Large ribosomal subunit protein uL24.